The following is a 101-amino-acid chain: Apolipoprotein C-II (101 aa).

The first 22 residues, 1-22, serve as a signal peptide directing secretion; the sequence is MGTRFLLALFLVLLVLGLEVQA. The interval 66–74 is lipid binding; sequence AVDERIRDM. Residues 78 to 101 form a lipoprotein lipase cofactor region; it reads STAAVTTYAGIFTDQLFSMLKGEQ.

The protein belongs to the apolipoprotein C2 family. Post-translationally, proapolipoprotein C-II is synthesized as a sialic acid containing glycoprotein which is subsequently desialylated prior to its proteolytic processing. In terms of processing, proapolipoprotein C-II, the major form found in plasma undergoes proteolytic cleavage of its N-terminal hexapeptide to generate apolipoprotein C-II, which occurs as the minor form in plasma.

The protein resides in the secreted. Its function is as follows. Component of chylomicrons, very low-density lipoproteins (VLDL), low-density lipoproteins (LDL), and high-density lipoproteins (HDL) in plasma. Plays an important role in lipoprotein metabolism as an activator of lipoprotein lipase. Both proapolipoprotein C-II and apolipoprotein C-II can activate lipoprotein lipase. The polypeptide is Apolipoprotein C-II (APOC2) (Tupaia glis (Common tree shrew)).